The chain runs to 415 residues: Multidrug resistance protein MdtA (415 aa).

Positions 1–21 (MKGSYKSRWVIVIVVVIAAIA) are cleaved as a signal peptide. 2 disordered regions span residues 32 to 60 (SRSA…GPLA) and 392 to 415 (EAQS…GARS). The segment covering 399–415 (PEEKATSREYAKKGARS) has biased composition (basic and acidic residues).

Belongs to the membrane fusion protein (MFP) (TC 8.A.1) family. In terms of assembly, part of a tripartite efflux system composed of MdtA, MdtB and MdtC.

It is found in the cell inner membrane. Functionally, the MdtABC tripartite complex confers resistance against novobiocin and deoxycholate. This chain is Multidrug resistance protein MdtA, found in Escherichia coli (strain K12 / MC4100 / BW2952).